A 218-amino-acid polypeptide reads, in one-letter code: uncharacterized protein (218 aa).

The 80-residue stretch at Gly-4–Gly-83 folds into the ACT domain.

This is an uncharacterized protein from Methanocaldococcus jannaschii (strain ATCC 43067 / DSM 2661 / JAL-1 / JCM 10045 / NBRC 100440) (Methanococcus jannaschii).